The sequence spans 489 residues: METCVLLLGLFLTSVHVTTAGSAAHRCFCQVTGTLDDCACDVETIDKFNNKDIFPKLQKLLSSDYFRFYKVNLNNGCPFWTDHSQCGLKYCAVKPCSPDEVPEGLKSSSYKYSEKASHDTEECEKAEKLGAVNGSLSDETRQALEEWKKYDDESDRFCMLDDEDSPESQYVDLLLNPERFTGYKGAEAWRIWNSIYEENCFKPYSVNRPLNPLASNSGDDGQGFYRWLEGLCVEKRAFFRLISGLHASINIHLSARYLLDENWFEMKWGHNVSEFQQRFDEDLTKGEGPKRLRNLYFLYLIELRALAKILPYFERSTFQLYTGQDTQDDQNKKLLLELLHVAKSFPLHFDETALFAGNNKEAMKLKEDFKLTFKNISRIMDCVECFKCRLWGKLQTQGLGTALKILFSERQIEAMPNKQHQSIISAQSAGNCVFVQRFRKNLHKCQRVEELQIVVVETQTVTVKMFQERATVQTDMHKHMTFPMFGYIQ.

The first 20 residues, 1-20 (METCVLLLGLFLTSVHVTTA), serve as a signal peptide directing secretion. Intrachain disulfides connect C27–C40, C29–C38, C77–C382, C86–C91, C86–C123, C91–C96, C200–C232, and C385–C388. FAD contacts are provided by R179, T181, and W192. The FAD site is built by S243 and H246. Residue N271 is glycosylated (N-linked (GlcNAc...) asparagine). FAD contacts are provided by R278 and R291. A glycan (N-linked (GlcNAc...) asparagine) is linked at N375.

This sequence belongs to the EROs family. As to quaternary structure, predominantly monomer. May function both as a monomer and a homodimer. FAD is required as a cofactor. In terms of processing, the Cys-86/Cys-91 and Cys-385/Cys-388 disulfide bonds constitute the redox-active center. The Cys-86/Cys-91 disulfide bond may accept electron from protein disulfide isomerase (PDI) and funnel them to the active site disulfide Cys-385/Cys-388.

The protein localises to the endoplasmic reticulum membrane. Enzyme activity is tightly regulated to prevent the accumulation of reactive oxygen species in the endoplasmic reticulum. Reversibly down-regulated by the formation of disulfide bonds between the active site Cys-86 and Cys-123, and between Cys-91 and Cys-96. Glutathione may be required to regulate its activity in the endoplasmic reticulum. Oxidoreductase involved in disulfide bond formation in the endoplasmic reticulum. Efficiently reoxidizes P4HB/PDI, the enzyme catalyzing protein disulfide formation, in order to allow P4HB to sustain additional rounds of disulfide formation. Following P4HB reoxidation, passes its electrons to molecular oxygen via FAD, leading to the production of reactive oxygen species (ROS) in the cell. Required for the folding of immunoglobulins. This chain is ERO1-like protein alpha, found in Danio rerio (Zebrafish).